The sequence spans 172 residues: Large ribosomal subunit protein uL16 (172 aa).

It belongs to the universal ribosomal protein uL16 family.

The sequence is that of Large ribosomal subunit protein uL16 from Methanocella arvoryzae (strain DSM 22066 / NBRC 105507 / MRE50).